The following is a 75-amino-acid chain: Putative defensin-like protein 126 (75 aa).

A signal peptide spans 1 to 24 (MSKSTFLFVYIILILGSMVNEIQG). Intrachain disulfides connect cysteine 29-cysteine 73, cysteine 38-cysteine 57, cysteine 43-cysteine 67, and cysteine 47-cysteine 69.

It belongs to the DEFL family.

It localises to the secreted. This is Putative defensin-like protein 126 (LCR6) from Arabidopsis thaliana (Mouse-ear cress).